A 143-amino-acid polypeptide reads, in one-letter code: Putative pre-16S rRNA nuclease (143 aa).

The protein belongs to the YqgF nuclease family.

Its subcellular location is the cytoplasm. Functionally, could be a nuclease involved in processing of the 5'-end of pre-16S rRNA. The protein is Putative pre-16S rRNA nuclease of Mycoplasma capricolum subsp. capricolum (strain California kid / ATCC 27343 / NCTC 10154).